The chain runs to 208 residues: Interleukin-6 (208 aa).

Residues 1–29 (MNSRFTSAFTPFAVSLGLLLVMTSAFPTP) form the signal peptide. Asn-38 carries an N-linked (GlcNAc...) asparagine glycan. A disulfide bridge links Cys-72 with Cys-78. Ser-81 is subject to Phosphoserine. The cysteines at positions 101 and 111 are disulfide-linked.

Belongs to the IL-6 superfamily. In terms of assembly, component of a hexamer of two molecules each of IL6, IL6R and IL6ST; first binds to IL6R to associate with the signaling subunit IL6ST. Interacts with IL6R (via the N-terminal ectodomain); this interaction may be affected by IL6R-binding with SORL1, hence decreasing IL6 cis signaling. Interacts with SORL1 (via the N-terminal ectodomain); this interaction leads to IL6 internalization and lysosomal degradation. May form a trimeric complex with the soluble SORL1 ectodomain and soluble IL6R receptor; this interaction might stabilize circulating IL6, hence promoting IL6 trans signaling.

It is found in the secreted. In terms of biological role, cytokine with a wide variety of biological functions in immunity, tissue regeneration, and metabolism. Binds to IL6R, then the complex associates to the signaling subunit IL6ST/gp130 to trigger the intracellular IL6-signaling pathway. The interaction with the membrane-bound IL6R and IL6ST stimulates 'classic signaling', whereas the binding of IL6 and soluble IL6R to IL6ST stimulates 'trans-signaling'. Alternatively, 'cluster signaling' occurs when membrane-bound IL6:IL6R complexes on transmitter cells activate IL6ST receptors on neighboring receiver cells. Functionally, IL6 is a potent inducer of the acute phase response. Rapid production of IL6 contributes to host defense during infection and tissue injury, but excessive IL6 synthesis is involved in disease pathology. In the innate immune response, is synthesized by myeloid cells, such as macrophages and dendritic cells, upon recognition of pathogens through toll-like receptors (TLRs) at the site of infection or tissue injury. In the adaptive immune response, is required for the differentiation of B cells into immunoglobulin-secreting cells. Plays a major role in the differentiation of CD4(+) T cell subsets. Essential factor for the development of T follicular helper (Tfh) cells that are required for the induction of germinal-center formation. Required to drive naive CD4(+) T cells to the Th17 lineage. Also required for proliferation of myeloma cells and the survival of plasmablast cells. Acts as an essential factor in bone homeostasis and on vessels directly or indirectly by induction of VEGF, resulting in increased angiogenesis activity and vascular permeability. Induces, through 'trans-signaling' and synergistically with IL1B and TNF, the production of VEGF. Involved in metabolic controls, is discharged into the bloodstream after muscle contraction increasing lipolysis and improving insulin resistance. 'Trans-signaling' in central nervous system also regulates energy and glucose homeostasis. Mediates, through GLP-1, crosstalk between insulin-sensitive tissues, intestinal L cells and pancreatic islets to adapt to changes in insulin demand. Also acts as a myokine. Plays a protective role during liver injury, being required for maintenance of tissue regeneration. Also has a pivotal role in iron metabolism by regulating HAMP/hepcidin expression upon inflammation or bacterial infection. Through activation of IL6ST-YAP-NOTCH pathway, induces inflammation-induced epithelial regeneration. The polypeptide is Interleukin-6 (IL6) (Bos taurus (Bovine)).